Consider the following 354-residue polypeptide: tRNA N6-adenosine threonylcarbamoyltransferase (354 aa).

Fe cation contacts are provided by His-111 and His-115. Residues 134-138 (LVSGG), Asp-167, Gly-180, and Asn-279 each bind substrate. Asp-319 is a Fe cation binding site.

This sequence belongs to the KAE1 / TsaD family. Fe(2+) serves as cofactor.

Its subcellular location is the cytoplasm. The catalysed reaction is L-threonylcarbamoyladenylate + adenosine(37) in tRNA = N(6)-L-threonylcarbamoyladenosine(37) in tRNA + AMP + H(+). Its function is as follows. Required for the formation of a threonylcarbamoyl group on adenosine at position 37 (t(6)A37) in tRNAs that read codons beginning with adenine. Is involved in the transfer of the threonylcarbamoyl moiety of threonylcarbamoyl-AMP (TC-AMP) to the N6 group of A37, together with TsaE and TsaB. TsaD likely plays a direct catalytic role in this reaction. In Neisseria gonorrhoeae (strain ATCC 700825 / FA 1090), this protein is tRNA N6-adenosine threonylcarbamoyltransferase.